A 244-amino-acid chain; its full sequence is GTP cyclohydrolase 1 type 2 homolog (244 aa).

A divalent metal cation contacts are provided by His-65, His-66, Asp-102, His-216, and Glu-220.

This sequence belongs to the GTP cyclohydrolase I type 2/NIF3 family. Homohexamer; trimer of dimers, that forms a hollow cage-like architecture.

In terms of biological role, DNA-binding protein exhibiting the ability to bind to both single-stranded and double-stranded DNA. This Methanocaldococcus jannaschii (strain ATCC 43067 / DSM 2661 / JAL-1 / JCM 10045 / NBRC 100440) (Methanococcus jannaschii) protein is GTP cyclohydrolase 1 type 2 homolog.